The sequence spans 205 residues: Large ribosomal subunit protein uL4 (205 aa).

The segment at 56 to 78 (ISGTTAKPYRQKHTGRARQGSLR) is disordered.

The protein belongs to the universal ribosomal protein uL4 family. In terms of assembly, part of the 50S ribosomal subunit.

One of the primary rRNA binding proteins, this protein initially binds near the 5'-end of the 23S rRNA. It is important during the early stages of 50S assembly. It makes multiple contacts with different domains of the 23S rRNA in the assembled 50S subunit and ribosome. In terms of biological role, forms part of the polypeptide exit tunnel. This is Large ribosomal subunit protein uL4 from Ehrlichia canis (strain Jake).